The primary structure comprises 310 residues: tRNA dimethylallyltransferase 2 (310 aa).

15–22 provides a ligand contact to ATP; the sequence is GPTASGKT. 17 to 22 lines the substrate pocket; that stretch reads TASGKT. Residues 40–43 form an interaction with substrate tRNA region; it reads DSMQ.

The protein belongs to the IPP transferase family. As to quaternary structure, monomer. Mg(2+) serves as cofactor.

The catalysed reaction is adenosine(37) in tRNA + dimethylallyl diphosphate = N(6)-dimethylallyladenosine(37) in tRNA + diphosphate. In terms of biological role, catalyzes the transfer of a dimethylallyl group onto the adenine at position 37 in tRNAs that read codons beginning with uridine, leading to the formation of N6-(dimethylallyl)adenosine (i(6)A). The protein is tRNA dimethylallyltransferase 2 of Geotalea uraniireducens (strain Rf4) (Geobacter uraniireducens).